The chain runs to 406 residues: Imidazolonepropionase (406 aa).

Residues histidine 72 and histidine 74 each coordinate Fe(3+). Residues histidine 72 and histidine 74 each coordinate Zn(2+). The 4-imidazolone-5-propanoate site is built by arginine 81, tyrosine 144, and histidine 177. Position 144 (tyrosine 144) interacts with N-formimidoyl-L-glutamate. Histidine 242 provides a ligand contact to Fe(3+). Zn(2+) is bound at residue histidine 242. A 4-imidazolone-5-propanoate-binding site is contributed by glutamine 245. A Fe(3+)-binding site is contributed by aspartate 317. Aspartate 317 contacts Zn(2+). Positions 319 and 321 each coordinate N-formimidoyl-L-glutamate. Residue threonine 322 participates in 4-imidazolone-5-propanoate binding.

Belongs to the metallo-dependent hydrolases superfamily. HutI family. It depends on Zn(2+) as a cofactor. The cofactor is Fe(3+).

It localises to the cytoplasm. It catalyses the reaction 4-imidazolone-5-propanoate + H2O = N-formimidoyl-L-glutamate. It participates in amino-acid degradation; L-histidine degradation into L-glutamate; N-formimidoyl-L-glutamate from L-histidine: step 3/3. Its function is as follows. Catalyzes the hydrolytic cleavage of the carbon-nitrogen bond in imidazolone-5-propanoate to yield N-formimidoyl-L-glutamate. It is the third step in the universal histidine degradation pathway. The sequence is that of Imidazolonepropionase from Yersinia pseudotuberculosis serotype O:3 (strain YPIII).